Reading from the N-terminus, the 653-residue chain is MAPGEKIKAKIKKNLPVKGPQAPTIKELMRWYCLNTNTHGCRRIVVSPGRLRRLLWIAFTLTAVGLIFWQCALLVFSFYTVSVSIKVHFQKLDFPAVTICNINPYKYSVVRDLLADLEQETRGALKSLYGFSEVKSRKQRDTESWSPAWEGVRPKFLNLVPLLIFNRDEKGKARDFLSLGRKRKISGNIIHKASNVVQVHESKKVVGFQLCPNDSSDCATYTFSSGINAIQEWYKLHYMNIMAQVPLEKKINMSYSAEELLVTCFFDGMSCDARNFTLFHHPMYGNCYTFNNRENETILSTSMGGSEYGLQVILYINEEEYNPFLVSATGAKVLIHRQDEYPFIEDVGTEIETAMSTSIGMHLTESFKLSEPYSQCTEDGSDVPIKNIYNAAYSLQICLYSCFQTKMVEKCGCAQYSQPLPPAANYCNYQQHPNWMYCYYQLYQAFVQEELGCQSVCKQSCSFKEWALTTSLAQWPSAVSEKWLLPVLTWDQGQQINKKLNKTDWAKLLIFYKDLNQRSIMESPANSIEMLLSNFGGQLGLWMSCSVVCVIEIIEVFFIDSLSIVTRRQWQKAKEWWARRKAAPSAEAPSGAQGQENPALEIDDDLPTFTSALSLPPAPGAQVPGTPPPRYNTLRLERTFSQQLADTRLPDEP.

The Cytoplasmic segment spans residues 1-55 (MAPGEKIKAKIKKNLPVKGPQAPTIKELMRWYCLNTNTHGCRRIVVSPGRLRRLL). The chain crosses the membrane as a helical span at residues 56–76 (WIAFTLTAVGLIFWQCALLVF). Over 77–538 (SFYTVSVSIK…EMLLSNFGGQ (462 aa)) the chain is Extracellular. Cystine bridges form between Cys-100/Cys-287, Cys-211/Cys-218, Cys-264/Cys-271, Cys-376/Cys-461, Cys-398/Cys-457, Cys-402/Cys-453, Cys-411/Cys-438, and Cys-413/Cys-427. The interval 137 to 225 (RKQRDTESWS…SDCATYTFSS (89 aa)) is gating release of inhibition by proteolysis (GRIP); protease-sensitive region that is responsible for the proteolytic activation of the channel. N-linked (GlcNAc...) asparagine glycosylation occurs at Asn-213. Asn-275 carries N-linked (GlcNAc...) asparagine glycosylation. The N-linked (GlcNAc...) asparagine glycan is linked to Asn-501. A helical transmembrane segment spans residues 539–559 (LGLWMSCSVVCVIEIIEVFFI). Residues 560–653 (DSLSIVTRRQ…LADTRLPDEP (94 aa)) lie on the Cytoplasmic side of the membrane. The segment at 582–632 (AAPSAEAPSGAQGQENPALEIDDDLPTFTSALSLPPAPGAQVPGTPPPRYN) is disordered. Residues 627-631 (PPPRY) carry the PY motif; recruits WW domain-containing proteins and is thereby required for ubiquitination and inhibition of the channel by NEDD4 and NEDD4L motif.

This sequence belongs to the amiloride-sensitive sodium channel (TC 1.A.6) family. SCNN1G subfamily. Component of the heterotrimeric epithelial sodium channel (ENaC) composed of an alpha/SCNN1A, a beta/SCNN1B and a gamma/SCNN1G subunit. Interacts with WWP1 (via WW domains). Interacts with WWP2 (via WW domains); inhibits the channel. Interacts with the full-length immature form of PCSK9 (pro-PCSK9); inhibits ENaC by promoting its proteasomal degradation. Interacts with BPIFA1; the interaction is indirect via SCNN1B and inhibits the proteolytic maturation of SCNN1A and SCNN1G and the activation of ENaC. Phosphorylated on serine and threonine residues. Aldosterone and insulin increase the basal level of phosphorylation. Post-translationally, ubiquitinated. Can be ubiquitinated at multiple sites and undergo monoubiquitination and polyubiquitination. Ubiquitination by NEDD4 or NEDD4L inhibits the ENaC channel through endocytosis, intracellular retention and degradation of its individual subunits. In terms of processing, ENaC is activated through the proteolytic maturation of its subunits. Furin cleaves the SCNN1G subunit first, followed by cleavage by prostasin (PRSS8), which results in a stepwise increase in the open probability of the channel due to the release of an inhibitory tract. BPIFA1, which is recruited by the SCNN1B subunit, prevents the proteolytic activation of ENaC. N-glycosylated. N-linked glycans are processed to complex type during ENaC complex assembly and transport to the plasma membrane.

It is found in the apical cell membrane. The enzyme catalyses Na(+)(in) = Na(+)(out). Originally identified and characterized by its inhibition by the diuretic drug amiloride. This is one of the three pore-forming subunits of the heterotrimeric epithelial sodium channel (ENaC), a critical regulator of sodium balance and fluid homeostasis. ENaC operates in epithelial tissues, where it mediates the electrodiffusion of sodium ions from extracellular fluid through the apical membrane of cells, with water following osmotically. It plays a key role in maintaining sodium homeostasis through electrogenic sodium reabsorption in the kidneys. Additionally, ENaC is essential for airway surface liquid homeostasis, which is crucial for proper mucus clearance. The sequence is that of Epithelial sodium channel subunit gamma from Oryctolagus cuniculus (Rabbit).